The primary structure comprises 191 residues: Protein GrpE (191 aa).

This sequence belongs to the GrpE family. In terms of assembly, homodimer.

It is found in the cytoplasm. In terms of biological role, participates actively in the response to hyperosmotic and heat shock by preventing the aggregation of stress-denatured proteins, in association with DnaK and GrpE. It is the nucleotide exchange factor for DnaK and may function as a thermosensor. Unfolded proteins bind initially to DnaJ; upon interaction with the DnaJ-bound protein, DnaK hydrolyzes its bound ATP, resulting in the formation of a stable complex. GrpE releases ADP from DnaK; ATP binding to DnaK triggers the release of the substrate protein, thus completing the reaction cycle. Several rounds of ATP-dependent interactions between DnaJ, DnaK and GrpE are required for fully efficient folding. In Helicobacter pylori (strain P12), this protein is Protein GrpE.